Here is a 417-residue protein sequence, read N- to C-terminus: Gamma-glutamyl phosphate reductase (417 aa).

It belongs to the gamma-glutamyl phosphate reductase family.

The protein resides in the cytoplasm. The catalysed reaction is L-glutamate 5-semialdehyde + phosphate + NADP(+) = L-glutamyl 5-phosphate + NADPH + H(+). It participates in amino-acid biosynthesis; L-proline biosynthesis; L-glutamate 5-semialdehyde from L-glutamate: step 2/2. Catalyzes the NADPH-dependent reduction of L-glutamate 5-phosphate into L-glutamate 5-semialdehyde and phosphate. The product spontaneously undergoes cyclization to form 1-pyrroline-5-carboxylate. This is Gamma-glutamyl phosphate reductase from Serratia marcescens.